Reading from the N-terminus, the 375-residue chain is Serpin B5 (375 aa).

Asparagine 99, asparagine 133, asparagine 188, and asparagine 361 each carry an N-linked (GlcNAc...) asparagine glycan.

Belongs to the serpin family. Ov-serpin subfamily. In terms of assembly, interacts with IRF6. As to expression, normal mammary epithelial cells.

The protein resides in the secreted. It is found in the extracellular space. Functionally, tumor suppressor. It blocks the growth, invasion, and metastatic properties of mammary tumors. As it does not undergo the S (stressed) to R (relaxed) conformational transition characteristic of active serpins, it exhibits no serine protease inhibitory activity. The sequence is that of Serpin B5 (SERPINB5) from Homo sapiens (Human).